The chain runs to 540 residues: Tyrosine-protein kinase transforming protein erbB (540 aa).

Positions 132-399 constitute a Protein kinase domain; the sequence is FKKVKVLGFG…KMARDPPRYL (268 aa). Residues 138–146 and lysine 165 each bind ATP; that span reads LGFGAFGTV. Aspartate 257 serves as the catalytic Proton acceptor.

The protein belongs to the protein kinase superfamily. Tyr protein kinase family. EGF receptor subfamily.

The catalysed reaction is L-tyrosyl-[protein] + ATP = O-phospho-L-tyrosyl-[protein] + ADP + H(+). This Avian erythroblastosis virus (strain ts167) protein is Tyrosine-protein kinase transforming protein erbB (V-ERBB).